A 367-amino-acid polypeptide reads, in one-letter code: Aflatoxin B1 aldehyde reductase member 2 (367 aa).

The segment covering 1-31 (MLRAASRAVGRAAVRSAQRSGTSVGRPLAMS) has biased composition (low complexity). Residues 1 to 45 (MLRAASRAVGRAAVRSAQRSGTSVGRPLAMSRPPPPRAASGAPLR) form a disordered region. The transit peptide at 1–46 (MLRAASRAVGRAAVRSAQRSGTSVGRPLAMSRPPPPRAASGAPLRP) directs the protein to the mitochondrion. Serine 40 carries the post-translational modification Phosphoserine. Threonine 48 carries the phosphothreonine modification. NADP(+) is bound at residue aspartate 80. Catalysis depends on tyrosine 85, which acts as the Proton donor. N6-acetyllysine is present on lysine 136. Residue histidine 149 coordinates substrate. Residues 179–180 (SN), glutamine 205, 234–244 (NPLAGGLLTGK), and arginine 258 each bind NADP(+). Lysine 244 is modified (N6-succinyllysine). Substrate contacts are provided by tyrosine 268 and arginine 271. 326-334 (SSLEQLEQN) lines the NADP(+) pocket. A substrate-binding site is contributed by arginine 367.

This sequence belongs to the aldo/keto reductase family. Aldo/keto reductase 2 subfamily. In terms of assembly, homodimer. In terms of tissue distribution, expressed in liver, kidney, testis and brain with low levels in skeletal muscle, spleen, heart and lung.

The protein localises to the mitochondrion. It localises to the golgi apparatus. It is found in the cytoplasm. It carries out the reaction 4-hydroxybutanoate + NADP(+) = succinate semialdehyde + NADPH + H(+). With respect to regulation, inhibited by citrate, succinate and tartrate. Catalyzes the NADPH-dependent reduction of succinic semialdehyde to gamma-hydroxybutyrate. May have an important role in producing the neuromodulator gamma-hydroxybutyrate (GHB). Has broad substrate specificity. Can reduce the dialdehyde protein-binding form of aflatoxin B1 (AFB1) to the non-binding AFB1 dialcohol. May be involved in protection of liver against the toxic and carcinogenic effects of AFB1, a potent hepatocarcinogen. The sequence is that of Aflatoxin B1 aldehyde reductase member 2 from Mus musculus (Mouse).